The chain runs to 389 residues: UDP-D-apiose/UDP-D-xylose synthase 1 (389 aa).

NAD(+) is bound by residues F28, I29, D49, N76, I77, and L96. UDP-alpha-D-glucuronate is bound by residues Y105, T139, E141, R182, and Y185. NAD(+)-binding residues include Y185 and K189. Y185 acts as the Proton acceptor in catalysis. N214 contacts UDP-alpha-D-glucuronate. NAD(+)-binding residues include W215 and R235. Residues K251, V253, R260, Y331, Y335, D337, and R341 each contribute to the UDP-alpha-D-glucuronate site.

The protein belongs to the NAD(P)-dependent epimerase/dehydratase family. Homodimer and heterodimer with AXS2. The cofactor is NAD(+). Widely expressed with stronger expression in leaves and stems, and lower levels in flowers, siliques, pistils, pollen and roots.

It is found in the cytoplasm. The catalysed reaction is UDP-alpha-D-glucuronate + H(+) = UDP-alpha-D-xylose + CO2. The enzyme catalyses UDP-alpha-D-glucuronate + H(+) = UDP-alpha-D-apiose + CO2. Inhibited by UDP-D-galacturonate. Its function is as follows. Together with AXS2, catalyzes the conversion of UDP-D-glucuronate into a mixture of UDP-D-apiose (UDP-Api) as the main product and UDP-D-xylose to a lesser extent, via a cycle of oxidation and reduction. D-Apiose (3-C-hydroxymethyl-d-erythrose) is the only plant cell wall monosaccharide with a branched carbon skeleton and is found in rhamnogalacturonan II (RG-II), apiogalacturonan, and several apioglycosides. The polypeptide is UDP-D-apiose/UDP-D-xylose synthase 1 (Arabidopsis thaliana (Mouse-ear cress)).